The primary structure comprises 183 residues: Beta-defensin 129 (183 aa).

The signal sequence occupies residues methionine 1–threonine 19. 3 cysteine pairs are disulfide-bonded: cysteine 27–cysteine 53, cysteine 34–cysteine 48, and cysteine 38–cysteine 54. The tract at residues threonine 141–glutamine 183 is disordered. Residues proline 161–leucine 170 show a composition bias toward pro residues.

It belongs to the beta-defensin family.

It is found in the secreted. Functionally, has antibacterial activity. This chain is Beta-defensin 129 (DEFB129), found in Gorilla gorilla gorilla (Western lowland gorilla).